A 502-amino-acid polypeptide reads, in one-letter code: Glycogen synthase (502 aa).

Residue Lys24 participates in ADP-alpha-D-glucose binding.

The protein belongs to the glycosyltransferase 1 family. Bacterial/plant glycogen synthase subfamily.

It catalyses the reaction [(1-&gt;4)-alpha-D-glucosyl](n) + ADP-alpha-D-glucose = [(1-&gt;4)-alpha-D-glucosyl](n+1) + ADP + H(+). Its pathway is glycan biosynthesis; glycogen biosynthesis. Its function is as follows. Synthesizes alpha-1,4-glucan chains using ADP-glucose. This is Glycogen synthase from Nitrosomonas eutropha (strain DSM 101675 / C91 / Nm57).